Consider the following 1336-residue polypeptide: Probable ATP-dependent DNA helicase HFM1 (1336 aa).

The 189-residue stretch at 159–347 (EHLLYSDRNF…WLSDENSPGV (189 aa)) folds into the Helicase ATP-binding domain. Residue 172–179 (APTGSGKT) participates in ATP binding. A DEAH box motif is present at residues 280-283 (DEVH). A Helicase C-terminal domain is found at 388-589 (NIIQTYSDGR…DVKVALEWIR (202 aa)). Residues 646 to 961 (PTETGKLMAL…GLDIQQSFNI (316 aa)) form the SEC63 domain. The segment at 1016 to 1031 (CNHNCKNKDACGHECC) adopts a C4-type zinc-finger fold.

Belongs to the helicase family. SKI2 subfamily. Zn(2+) serves as cofactor.

The catalysed reaction is Couples ATP hydrolysis with the unwinding of duplex DNA by translocating in the 3'-5' direction.. It carries out the reaction ATP + H2O = ADP + phosphate + H(+). In terms of biological role, required for crossover formation and complete synapsis of homologous chromosomes during meiosis. This is Probable ATP-dependent DNA helicase HFM1 (hfm1) from Xenopus tropicalis (Western clawed frog).